Here is a 484-residue protein sequence, read N- to C-terminus: Ribosomal RNA small subunit methyltransferase F (484 aa).

Residues 119–125, glutamate 143, aspartate 170, and aspartate 188 each bind S-adenosyl-L-methionine; that span reads ASAPGSK. Cysteine 241 serves as the catalytic Nucleophile.

The protein belongs to the class I-like SAM-binding methyltransferase superfamily. RsmB/NOP family.

The protein localises to the cytoplasm. The catalysed reaction is cytidine(1407) in 16S rRNA + S-adenosyl-L-methionine = 5-methylcytidine(1407) in 16S rRNA + S-adenosyl-L-homocysteine + H(+). Its function is as follows. Specifically methylates the cytosine at position 1407 (m5C1407) of 16S rRNA. The chain is Ribosomal RNA small subunit methyltransferase F from Shewanella frigidimarina (strain NCIMB 400).